A 429-amino-acid chain; its full sequence is Ribosomal RNA small subunit methyltransferase B (429 aa).

Residues 254 to 260 (CAAPGGK), aspartate 277, aspartate 303, and aspartate 322 contribute to the S-adenosyl-L-methionine site. Cysteine 375 serves as the catalytic Nucleophile.

Belongs to the class I-like SAM-binding methyltransferase superfamily. RsmB/NOP family.

Its subcellular location is the cytoplasm. The enzyme catalyses cytidine(967) in 16S rRNA + S-adenosyl-L-methionine = 5-methylcytidine(967) in 16S rRNA + S-adenosyl-L-homocysteine + H(+). In terms of biological role, specifically methylates the cytosine at position 967 (m5C967) of 16S rRNA. This chain is Ribosomal RNA small subunit methyltransferase B, found in Serratia proteamaculans (strain 568).